We begin with the raw amino-acid sequence, 388 residues long: Succinate--CoA ligase [ADP-forming] subunit beta (388 aa).

One can recognise an ATP-grasp domain in the interval 9–244; the sequence is KEIFRSMGVA…LEEEDPKEIE (236 aa). Residues K46, 53 to 55, E99, C102, and E107 contribute to the ATP site; that span reads GRG. Mg(2+) contacts are provided by N199 and D213. Substrate contacts are provided by residues N264 and 321–323; that span reads GIM.

The protein belongs to the succinate/malate CoA ligase beta subunit family. Heterotetramer of two alpha and two beta subunits. Mg(2+) serves as cofactor.

It catalyses the reaction succinate + ATP + CoA = succinyl-CoA + ADP + phosphate. The catalysed reaction is GTP + succinate + CoA = succinyl-CoA + GDP + phosphate. The protein operates within carbohydrate metabolism; tricarboxylic acid cycle; succinate from succinyl-CoA (ligase route): step 1/1. Its function is as follows. Succinyl-CoA synthetase functions in the citric acid cycle (TCA), coupling the hydrolysis of succinyl-CoA to the synthesis of either ATP or GTP and thus represents the only step of substrate-level phosphorylation in the TCA. The beta subunit provides nucleotide specificity of the enzyme and binds the substrate succinate, while the binding sites for coenzyme A and phosphate are found in the alpha subunit. This Staphylococcus aureus (strain Mu3 / ATCC 700698) protein is Succinate--CoA ligase [ADP-forming] subunit beta.